We begin with the raw amino-acid sequence, 1966 residues long: Dedicator of cytokinesis protein 4 (1966 aa).

The region spanning 6-67 (EHEKYGVVIA…PSSYVHLKNA (62 aa)) is the SH3 domain. The residue at position 167 (Tyr167) is a Phosphotyrosine. At Thr193 the chain carries Phosphothreonine. In terms of domain architecture, C2 DOCK-type spans 401–574 (RNDLYITIER…ESFCITSFLC (174 aa)). In terms of domain architecture, DOCKER spans 1190–1596 (KTELNKEEMY…LGIQEFSACM (407 aa)). Phosphoserine is present on residues Ser1599, Ser1607, Ser1614, Ser1618, Ser1620, and Ser1631. Disordered stretches follow at residues 1648-1729 (SQAS…IYPT) and 1742-1966 (IGDG…VSQL). The span at 1672–1703 (PSPSTSSLSSTHSASPNVTSSAPSSARASPLL) shows a compositional bias: low complexity. Ser1769 carries the post-translational modification Phosphoserine. An SH3-binding motif is present at residues 1788–1794 (PPVPPRP). A compositionally biased stretch (polar residues) spans 1795–1809 (TQTASPARHTTSVSP). Low complexity predominate over residues 1838–1863 (SNSPVLSGSYSSGISSLSRCSTSETS). Residues 1864–1873 (GFENQVNEQS) are compositionally biased toward polar residues. Residues 1941 to 1954 (SHLENGARRTDPGP) show a composition bias toward basic and acidic residues.

Belongs to the DOCK family. As to quaternary structure, interacts with nucleotide-free Rap1; functions as a guanine nucleotide exchange factor (GEF) for Rap1. Interacts (via DOCKER domain) with RAC1; functions as a guanine nucleotide exchange factor (GEF) for RAC1. Interacts with the SH3 domain of CRK. Interacts with FASLG. Interacts with ELMO2 and EPHA2; mediates activation of RAC1 by EPHA2. Interacts with USH1C (via PDZ 1 domain). Widely expressed at low level. Highly expressed in skeletal muscle, prostate and ovary. As to expression, may be specifically expressed in the brain and eye.

It is found in the cell membrane. The protein localises to the cell projection. It localises to the cytoplasm. The protein resides in the cytosol. In terms of biological role, functions as a guanine nucleotide exchange factor (GEF) that promotes the exchange of GDP to GTP, converting inactive GDP-bound small GTPases into their active GTP-bound form. Involved in regulation of adherens junction between cells. Plays a role in cell migration. Has a higher guanine nucleotide exchange factor activity compared to other isoforms. The protein is Dedicator of cytokinesis protein 4 (DOCK4) of Homo sapiens (Human).